The following is a 607-amino-acid chain: Albumin (607 aa).

An N-terminal signal peptide occupies residues 1-18 (MKWVTFVSLLFLFSSAYS). The propeptide occupies 19–24 (RGVLRR). Albumin domains follow at residues 19-209 (RGVL…DALK), 210-402 (ERIL…QFTP), and 403-600 (LVEE…KLVA). Histidine 27 serves as a coordination point for Cu cation. Phosphoserine is present on serine 29. Ca(2+) is bound by residues glutamate 30 and aspartate 37. Cysteine 77 and cysteine 86 are oxidised to a cystine. Residues serine 82 and serine 89 each carry the phosphoserine modification. Histidine 91 provides a ligand contact to Zn(2+). 6 disulfides stabilise this stretch: cysteine 99-cysteine 115, cysteine 114-cysteine 125, cysteine 147-cysteine 192, cysteine 191-cysteine 200, cysteine 223-cysteine 269, and cysteine 268-cysteine 276. Threonine 107 bears the Phosphothreonine mark. Glutamate 267 contacts Ca(2+). Residues histidine 270 and aspartate 272 each coordinate Zn(2+). Positions 272, 275, 278, and 282 each coordinate Ca(2+). 8 disulfides stabilise this stretch: cysteine 288/cysteine 302, cysteine 301/cysteine 312, cysteine 339/cysteine 384, cysteine 383/cysteine 392, cysteine 415/cysteine 461, cysteine 460/cysteine 471, cysteine 484/cysteine 500, and cysteine 499/cysteine 510. Residue serine 442 is modified to Phosphoserine. Residues threonine 443 and threonine 445 each carry the phosphothreonine modification. At serine 512 the chain carries Phosphoserine. Intrachain disulfides connect cysteine 537–cysteine 582 and cysteine 581–cysteine 590. Position 557 is an N6-methyllysine (lysine 557). Position 569 is a phosphothreonine (threonine 569). Lysine 587 is modified (N6-succinyllysine).

Belongs to the ALB/AFP/VDB family. As to quaternary structure, interacts with FCGRT; this interaction regulates ALB homeostasis. Interacts with TASOR. In plasma, occurs in a covalently-linked complex with chromophore-bound alpha-1-microglobulin; this interaction does not prevent fatty acid binding to ALB. Post-translationally, phosphorylated by FAM20C in the extracellular medium. In terms of tissue distribution, plasma.

It localises to the secreted. Its function is as follows. Binds water, Ca(2+), Na(+), K(+), fatty acids, hormones, bilirubin and drugs. Its main function is the regulation of the colloidal osmotic pressure of blood. Major zinc transporter in plasma, typically binds about 80% of all plasma zinc. Major calcium and magnesium transporter in plasma, binds approximately 45% of circulating calcium and magnesium in plasma. Potentially has more than two calcium-binding sites and might additionally bind calcium in a non-specific manner. The shared binding site between zinc and calcium at residue Asp-272 suggests a crosstalk between zinc and calcium transport in the blood. The rank order of affinity is zinc &gt; calcium &gt; magnesium. Binds to the bacterial siderophore enterobactin and inhibits enterobactin-mediated iron uptake of E.coli from ferric transferrin, and may thereby limit the utilization of iron and growth of enteric bacteria such as E.coli. Does not prevent iron uptake by the bacterial siderophore aerobactin. This chain is Albumin (ALB), found in Equus caballus (Horse).